The chain runs to 535 residues: Glucose-6-phosphate isomerase (535 aa).

Glu359 acts as the Proton donor in catalysis. Active-site residues include His390 and Lys505.

This sequence belongs to the GPI family.

Its subcellular location is the cytoplasm. It catalyses the reaction alpha-D-glucose 6-phosphate = beta-D-fructose 6-phosphate. It participates in carbohydrate biosynthesis; gluconeogenesis. It functions in the pathway carbohydrate degradation; glycolysis; D-glyceraldehyde 3-phosphate and glycerone phosphate from D-glucose: step 2/4. Functionally, catalyzes the reversible isomerization of glucose-6-phosphate to fructose-6-phosphate. The protein is Glucose-6-phosphate isomerase of Treponema pallidum (strain Nichols).